Consider the following 1381-residue polypeptide: Serine-aspartate repeat-containing protein D (1381 aa).

A signal peptide spans 1–35; the sequence is MLNRENKTAITRKGMVSNRLNKFSIRKYTVGTASI. The short motif at 23-34 is the YSIRK-G/S signaling motif element; it reads FSIRKYTVGTAS. Residues 36-568 are ligand binding A region; that stretch reads LVGTTLIFGL…NNQSGGAGQE (533 aa). The segment at 54–185 is disordered; it reads ESTNKELNEA…NKKVDAKTES (132 aa). Polar residues-rich tracts occupy residues 62–71 and 94–108; these read EATTSASDNQ and EMVS…SNGN. Over residues 130–145 the composition is skewed to basic and acidic residues; it reads KSDEQASPKSTNEDLN. 2 stretches are compositionally biased toward polar residues: residues 146-155 and 163-173; these read TKQTISNQEA and NKSVVNVQPTN. A compositionally biased stretch (basic and acidic residues) spans 174–183; sequence EENKKVDAKT. 5 CNA-B domains span residues 569 to 680, 681 to 791, 792 to 901, 902 to 1012, and 1013 to 1123; these read VYKI…IYKP, KYNL…YKTP, KYNL…FYKP, TYNL…YKTP, and KYSL…EEET. Disordered regions lie at residues 857–883, 972–992, and 1078–1357; these read ETPS…TSTT, YTPT…GLTT, and EKPA…SNNA. 2 stretches are compositionally biased toward polar residues: residues 860–869 and 972–981; these read SGYTPTQVGS and YTPTSVTSGN. Acidic residues-rich tracts occupy residues 1091-1101, 1118-1134, 1142-1164, and 1172-1320; these read TEDDKDADGGE, YYEE…DSDS, and SDSD…DSDS. The LPXTG sorting signal motif lies at 1344–1348; it reads LPETG. Residue Thr-1347 is modified to Pentaglycyl murein peptidoglycan amidated threonine. A propeptide spans 1348–1381 (removed by sortase); it reads GNENSGSNNATLFGGLFAALGSLLLFGRRKKQNK.

It belongs to the serine-aspartate repeat-containing protein (SDr) family. In terms of assembly, interacts with host DSG1; this interaction increases S.aureus adherence to keratinocytes.

It is found in the secreted. Its subcellular location is the cell wall. In terms of biological role, cell surface-associated calcium-binding protein which plays an important role in adhesion and pathogenesis. Mediates interactions with components of the extracellular matrix such as host DSG1 to promote bacterial adhesion to host cells. Contributes to the resistance to killing by innate immune components such as neutrophils present in blood and thus attenuates bacterial clearance. In Staphylococcus aureus (strain USA300), this protein is Serine-aspartate repeat-containing protein D (sdrD).